Reading from the N-terminus, the 400-residue chain is Phosphoglycerate kinase (400 aa).

Residues 23-25, Arg-38, 61-64, Arg-120, and Arg-153 each bind substrate; these read DLN and HFGR. Residues Lys-203, Glu-325, and 355 to 358 each bind ATP; that span reads GGDT.

Belongs to the phosphoglycerate kinase family. In terms of assembly, monomer.

Its subcellular location is the cytoplasm. It catalyses the reaction (2R)-3-phosphoglycerate + ATP = (2R)-3-phospho-glyceroyl phosphate + ADP. The protein operates within carbohydrate degradation; glycolysis; pyruvate from D-glyceraldehyde 3-phosphate: step 2/5. The protein is Phosphoglycerate kinase of Methylorubrum extorquens (strain CM4 / NCIMB 13688) (Methylobacterium extorquens).